Here is a 209-residue protein sequence, read N- to C-terminus: Large ribosomal subunit protein uL4 (209 aa).

The tract at residues 44–77 (QRQGTHKSKERSEVSGSTRKLIRQKGGGGARRGD) is disordered.

The protein belongs to the universal ribosomal protein uL4 family. Part of the 50S ribosomal subunit.

In terms of biological role, one of the primary rRNA binding proteins, this protein initially binds near the 5'-end of the 23S rRNA. It is important during the early stages of 50S assembly. It makes multiple contacts with different domains of the 23S rRNA in the assembled 50S subunit and ribosome. Its function is as follows. Forms part of the polypeptide exit tunnel. In Parabacteroides distasonis (strain ATCC 8503 / DSM 20701 / CIP 104284 / JCM 5825 / NCTC 11152), this protein is Large ribosomal subunit protein uL4.